The chain runs to 524 residues: Mitochondrial-processing peptidase subunit alpha (524 aa).

The transit peptide at 1-32 (MATAVWAAARLLRGSAALCARPKFGSPAHRRF) directs the protein to the mitochondrion. Lys63 is modified (N6-succinyllysine).

Belongs to the peptidase M16 family. In terms of assembly, heterodimer of PMPCA (alpha) and PMPCB (beta) subunits, forming the mitochondrial processing protease (MPP) in which PMPCA is involved in substrate recognition and binding and PMPCB is the catalytic subunit.

It is found in the mitochondrion matrix. The protein localises to the mitochondrion inner membrane. In terms of biological role, substrate recognition and binding subunit of the essential mitochondrial processing protease (MPP), which cleaves the mitochondrial sequence off newly imported precursors proteins. This is Mitochondrial-processing peptidase subunit alpha (Pmpca) from Rattus norvegicus (Rat).